Reading from the N-terminus, the 313-residue chain is Protein FixB (313 aa).

255–283 (LYLAVGISGQIQHMVGANASQTIFAINKD) lines the FAD pocket.

Belongs to the ETF alpha-subunit/FixB family. Heterodimer of FixA and FixB.

The protein operates within amine and polyamine metabolism; carnitine metabolism. Functionally, required for anaerobic carnitine reduction. May bring reductant to CaiA. This is Protein FixB from Escherichia coli O6:K15:H31 (strain 536 / UPEC).